The following is a 538-amino-acid chain: Serine/threonine-protein phosphatase 5 (538 aa).

3 TPR repeats span residues 13-46, 48-80, and 81-114; these read AEEF…NSNN, VYWA…DSRY, and SKGY…SPND. 2 helical membrane passes run 163 to 183 and 185 to 205; these read SSMP…VVAV and GFAT…TFWW. Residues Asp282, His284, Asp311, and Asn343 each contribute to the Mn(2+) site. The active-site Proton donor is His344. Mn(2+)-binding residues include His392 and His467.

It belongs to the PPP phosphatase family. PP-5 (PP-T) subfamily. In terms of assembly, interacts with PHYA and PHYB, mostly when they are phosphorylated and in Pfr forms. Mn(2+) is required as a cofactor.

It localises to the endoplasmic reticulum membrane. It is found in the nucleus membrane. The protein resides in the cytoplasm. Its subcellular location is the nucleus. The protein localises to the nucleoplasm. It localises to the nucleus speckle. The catalysed reaction is O-phospho-L-seryl-[protein] + H2O = L-seryl-[protein] + phosphate. The enzyme catalyses O-phospho-L-threonyl-[protein] + H2O = L-threonyl-[protein] + phosphate. With respect to regulation, activated by arachidonic acid (AA). Its function is as follows. Isoform 2 dephosphorylates phosphorylated phytochromes, with a preference toward Pfr forms, and enhances phytochrome-mediated photoresponses, probably by enhancing their stability and their binding affinity for light signal transducers such as NDPK2. Can use para-nitrophenylphosphate (pNPP) as substrate. The protein is Serine/threonine-protein phosphatase 5 (PAPP5) of Arabidopsis thaliana (Mouse-ear cress).